Consider the following 351-residue polypeptide: L-threonine 3-dehydrogenase (351 aa).

Cysteine 39 contacts Zn(2+). Residues threonine 41 and histidine 44 each act as charge relay system in the active site. Positions 64, 65, 94, 97, 100, and 108 each coordinate Zn(2+). NAD(+) contacts are provided by residues isoleucine 176, aspartate 196, arginine 201, 271–273 (LGI), and 295–296 (IY).

The protein belongs to the zinc-containing alcohol dehydrogenase family. As to quaternary structure, homotetramer. Requires Zn(2+) as cofactor.

It is found in the cytoplasm. It carries out the reaction L-threonine + NAD(+) = (2S)-2-amino-3-oxobutanoate + NADH + H(+). The protein operates within amino-acid degradation; L-threonine degradation via oxydo-reductase pathway; glycine from L-threonine: step 1/2. In terms of biological role, catalyzes the NAD(+)-dependent oxidation of L-threonine to 2-amino-3-ketobutyrate. The chain is L-threonine 3-dehydrogenase from Francisella philomiragia subsp. philomiragia (strain ATCC 25017 / CCUG 19701 / FSC 153 / O#319-036).